Consider the following 251-residue polypeptide: Hydroxyacylglutathione hydrolase (251 aa).

Positions 53, 55, 57, 58, 110, 127, and 165 each coordinate Zn(2+).

The protein belongs to the metallo-beta-lactamase superfamily. Glyoxalase II family. Monomer. Zn(2+) is required as a cofactor.

The catalysed reaction is an S-(2-hydroxyacyl)glutathione + H2O = a 2-hydroxy carboxylate + glutathione + H(+). It participates in secondary metabolite metabolism; methylglyoxal degradation; (R)-lactate from methylglyoxal: step 2/2. Its function is as follows. Thiolesterase that catalyzes the hydrolysis of S-D-lactoyl-glutathione to form glutathione and D-lactic acid. This chain is Hydroxyacylglutathione hydrolase, found in Escherichia coli O9:H4 (strain HS).